Here is a 331-residue protein sequence, read N- to C-terminus: DSC E3 ubiquitin ligase complex subunit D (331 aa).

Asparagine 26 carries N-linked (GlcNAc...) asparagine glycosylation. The next 3 helical transmembrane spans lie at 63–83 (ILIY…ILFA), 107–127 (PFIG…NFFT), and 159–179 (LFLL…LIVE). The interval 188–225 (STTSTEILRVQDHDSEERGVHRTRPESRSSVVGAELDE) is disordered. A compositionally biased stretch (basic and acidic residues) spans 196–214 (RVQDHDSEERGVHRTRPES).

In terms of assembly, component of the DSC E3 ubiquitin ligase complex composed of dscA, dscB, dscC and dscD.

It localises to the endoplasmic reticulum membrane. It functions in the pathway protein modification; protein ubiquitination. Functionally, component of the DSC E3 ubiquitin ligase complex which is required for the srbA transcriptional activator proteolytic cleavage to release the soluble transcription factor from the membrane in low oxygen or sterol conditions. Required for growth during hypoxia and triazole drug susceptibility, as well as for virulence in a murine model of invasive pulmonary aspergillosis (IPA). This chain is DSC E3 ubiquitin ligase complex subunit D, found in Aspergillus fumigatus (strain ATCC MYA-4609 / CBS 101355 / FGSC A1100 / Af293) (Neosartorya fumigata).